The following is a 392-amino-acid chain: Na(+)/H(+) antiporter NhaA (392 aa).

Transmembrane regions (helical) follow at residues 14–34 (AGGLILIFAAVVALFMANSPL), 59–79 (LLLWINDGLMAIFFLVVGLEV), 95–115 (IFPAIAALGGMLAPALIYLLF), 125–145 (GWAIPAATDIAFALGVMALLG), 154–174 (VFLLALAIIDDLGVIIIIALF), 179–199 (VSLQALGMAAAAIALLGYMNW), 213–233 (LVLWVCILKSGVHATLAGVIV), 254–274 (GLHPWVAYLILPLFAFANAGV), 287–307 (LLPLGIASGLFIGKPLGIFLF), 328–348 (IFAVSVLCGIGFTMSIFIASL), and 363–383 (LGILLGSTTAAVVGYSLLRLA).

Belongs to the NhaA Na(+)/H(+) (TC 2.A.33) antiporter family.

It is found in the cell inner membrane. It carries out the reaction Na(+)(in) + 2 H(+)(out) = Na(+)(out) + 2 H(+)(in). Na(+)/H(+) antiporter that extrudes sodium in exchange for external protons. This Yersinia enterocolitica serotype O:8 / biotype 1B (strain NCTC 13174 / 8081) protein is Na(+)/H(+) antiporter NhaA.